Consider the following 189-residue polypeptide: dCTP deaminase (189 aa).

DCTP is bound by residues 112 to 117 (KSTYAR), 136 to 138 (TLE), Gln157, Tyr171, and Gln181. Residue Glu138 is the Proton donor/acceptor of the active site.

The protein belongs to the dCTP deaminase family. As to quaternary structure, homotrimer.

The enzyme catalyses dCTP + H2O + H(+) = dUTP + NH4(+). It functions in the pathway pyrimidine metabolism; dUMP biosynthesis; dUMP from dCTP (dUTP route): step 1/2. In terms of biological role, catalyzes the deamination of dCTP to dUTP. This Acinetobacter baylyi (strain ATCC 33305 / BD413 / ADP1) protein is dCTP deaminase.